A 540-amino-acid polypeptide reads, in one-letter code: Protein SOSEKI 3 (540 aa).

A DIX-like oligomerization domain region spans residues 32 to 123; the sequence is KKVQIVYYLS…YVLKGSELFD (92 aa). Disordered regions lie at residues 147–201 and 219–294; these read EPPS…DAKN and ADAS…SSLG. Low complexity-rich tracts occupy residues 150–163 and 185–194; these read SSRS…SSSM and RSVSSSGVSP. Residues 221-244 show a composition bias toward polar residues; that stretch reads ASTQTDETVSGRSKTPIETFSRGV. Acidic residues predominate over residues 246–256; it reads TDEDVSSEPET. A compositionally biased stretch (low complexity) spans 280-292; sequence NSVSPPFSNSASS. The short motif at 342 to 343 is the Association to cell membranes element; that stretch reads CG. The tract at residues 412–492 is disordered; it reads KKDAADSNAS…KNIPCTTKTH (81 aa). The span at 418–437 shows a compositional bias: polar residues; sequence SNASLKRSSSYNGDRASNQM. Basic and acidic residues predominate over residues 471-482; that stretch reads SEKRRDSSEDTT.

This sequence belongs to the SOSEKI family. In terms of assembly, homodimer. Forms long polymer filaments with other SOKs proteins polymers (e.g. SOK1, SOK2, SOK3 and SOK4) crucial for polar localization and biological activity. Binds to ANGUSTIFOLIA (AN). In terms of tissue distribution, expressed during embryogenesis and in roots.

It localises to the cell membrane. Its function is as follows. SOSEKI proteins (SOK1-5) locally interpret global polarity cues and can influence cell division orientation to coordinate cell polarization relative to body axes, probably by guiding ANGUSTIFOLIA (AN) polarized localization. In Arabidopsis thaliana (Mouse-ear cress), this protein is Protein SOSEKI 3.